Reading from the N-terminus, the 338-residue chain is Deoxyhypusine hydroxylase (338 aa).

5 HEAT-like PBS-type repeats span residues 71-97 (LKHELAYCLGQTRNPDAVAFLQQVLKD), 104-130 (CRHEAAEALGALGYEDSLEILKALKDD), 200-233 (QRYRAMFALRDLASPPDLPTAVQAVDALAKGLKD), 238-264 (FRHEVAFVFGQLCHPASVPSLTECLSN), and 271-298 (VRHEAAEALGSLGDVEGVEDTLKKFLND). Fe cation contacts are provided by His73, Glu74, His106, and Glu107. 4 residues coordinate Fe cation: His240, Glu241, His273, and Glu274.

This sequence belongs to the deoxyhypusine hydroxylase family. It depends on Fe(2+) as a cofactor.

It localises to the cytoplasm. The protein localises to the nucleus. The catalysed reaction is [eIF5A protein]-deoxyhypusine + AH2 + O2 = [eIF5A protein]-hypusine + A + H2O. Its pathway is protein modification; eIF5A hypusination. In terms of biological role, catalyzes the hydroxylation of the N(6)-(4-aminobutyl)-L-lysine intermediate to form hypusine, an essential post-translational modification only found in mature eIF-5A factor. In Aspergillus niger (strain ATCC MYA-4892 / CBS 513.88 / FGSC A1513), this protein is Deoxyhypusine hydroxylase (lia1).